The sequence spans 118 residues: UPF0329 protein ECU03_0030/ECU05_0040/ECU06_0010/ECU06_1710/ECU11_0010 (118 aa).

The protein belongs to the UPF0329 family.

The sequence is that of UPF0329 protein ECU03_0030/ECU05_0040/ECU06_0010/ECU06_1710/ECU11_0010 from Encephalitozoon cuniculi (strain GB-M1) (Microsporidian parasite).